The following is a 439-amino-acid chain: MENLAPLYVNHINEQNRRVADVLAREQLEGLAIHSGQYHRQFLDDINYPFKANPHFKAWLPVLDIPNCWILTNGRDKPVLVFYRPVDFWHKVSDVPESFWTEHFEIKLLTKAEKVADLLPKNLDTWAYIGEHLDVADVLGFKNRNPDGVMNYFHWHRSFKTDYELACMREANRVAVAGHNAAREAFYKGASEFEIQQQYLSAIGQGENDVPYGNIIALNQNAAILHYTALEHAAPANRHSFLIDAGASFNGYAADITRTYAFEKNVFDELIKAMDKMQRELVDMMRPGVRFTDLHLATHHKLAQLLLEFGIARGEASDLVEQGVTSVFFPHGLGHMLGLQVHDVAGFAHDERGTHLAAPERHPFLRCTRVLAPRHVLTIEPGFYIIDSLLTELKADGRAEAVNWDMVNTLRPFGGIRIEDNVIVHQERNENMTRDLGLN.

Mn(2+) contacts are provided by aspartate 244, aspartate 255, histidine 335, glutamate 380, and glutamate 419.

This sequence belongs to the peptidase M24B family. Bacterial-type prolidase subfamily. Mn(2+) is required as a cofactor.

It carries out the reaction Xaa-L-Pro dipeptide + H2O = an L-alpha-amino acid + L-proline. Functionally, splits dipeptides with a prolyl residue in the C-terminal position. This chain is Xaa-Pro dipeptidase, found in Shewanella amazonensis (strain ATCC BAA-1098 / SB2B).